The sequence spans 248 residues: Octanoyltransferase (248 aa).

The region spanning 53–238 (ADTGDEIWVV…NLDGASAAAD (186 aa)) is the BPL/LPL catalytic domain. Substrate-binding positions include 93-100 (RGGQITYH), 165-167 (ALG), and 178-180 (GLS). Catalysis depends on cysteine 196, which acts as the Acyl-thioester intermediate.

Belongs to the LipB family.

The protein resides in the cytoplasm. It catalyses the reaction octanoyl-[ACP] + L-lysyl-[protein] = N(6)-octanoyl-L-lysyl-[protein] + holo-[ACP] + H(+). It functions in the pathway protein modification; protein lipoylation via endogenous pathway; protein N(6)-(lipoyl)lysine from octanoyl-[acyl-carrier-protein]: step 1/2. Its function is as follows. Catalyzes the transfer of endogenously produced octanoic acid from octanoyl-acyl-carrier-protein onto the lipoyl domains of lipoate-dependent enzymes. Lipoyl-ACP can also act as a substrate although octanoyl-ACP is likely to be the physiological substrate. This chain is Octanoyltransferase, found in Burkholderia orbicola (strain MC0-3).